A 116-amino-acid polypeptide reads, in one-letter code: Protein Wnt-5b (116 aa).

Serine 1 is lipidated: O-palmitoleoyl serine; by PORCN. N-linked (GlcNAc...) asparagine glycans are attached at residues asparagine 69 and asparagine 83. Residues cysteine 82 and cysteine 97 are joined by a disulfide bond.

The protein belongs to the Wnt family. In terms of processing, palmitoleoylation is required for efficient binding to frizzled receptors. Depalmitoleoylation leads to Wnt signaling pathway inhibition.

The protein localises to the secreted. The protein resides in the extracellular space. It is found in the extracellular matrix. Functionally, ligand for members of the frizzled family of seven transmembrane receptors. Probable developmental protein. May be a signaling molecule which affects the development of discrete regions of tissues. Is likely to signal over only few cell diameters. This is Protein Wnt-5b (WNT-5B) from Alopias vulpinus (Common thresher shark).